The following is a 397-amino-acid chain: DNA-directed RNA polymerase subunit Rpo1C (397 aa).

The protein belongs to the RNA polymerase beta' chain family. In terms of assembly, part of the RNA polymerase complex.

The protein localises to the cytoplasm. The enzyme catalyses RNA(n) + a ribonucleoside 5'-triphosphate = RNA(n+1) + diphosphate. Functionally, DNA-dependent RNA polymerase (RNAP) catalyzes the transcription of DNA into RNA using the four ribonucleoside triphosphates as substrates. Forms part of the jaw domain. The polypeptide is DNA-directed RNA polymerase subunit Rpo1C (Halobacterium salinarum (strain ATCC 29341 / DSM 671 / R1)).